The following is an 828-amino-acid chain: E3 ubiquitin-protein ligase bre-1 (828 aa).

The disordered stretch occupies residues 1-25 (MMKRNNEGIGGEGVANSPPDDTQQK). The tract at residues 1–309 (MMKRNNEGIG…SREIEALRAD (309 aa)) is interaction with ubc-1. 2 coiled-coil regions span residues 53–92 (QAAK…FLKV) and 185–251 (HKEL…TEKQ). The span at 269 to 298 (ASGNATASSSATLNQSEKKMGSPGSPPSES) shows a compositional bias: low complexity. The disordered stretch occupies residues 269–304 (ASGNATASSSATLNQSEKKMGSPGSPPSESTSREIE). 3 coiled-coil regions span residues 311 to 345 (DEQA…KMET), 460 to 616 (VNTL…RNLK), and 660 to 756 (DEVL…NDSA). An RING-type zinc finger spans residues 776-815 (CPSCKTRPKDCIMLKCYHLFCETCIKTMYDTRQRKCPKCN).

Belongs to the BRE1 family. As to quaternary structure, interacts with ubc-1. Interacts with mrg-1.

The protein resides in the nucleus. The catalysed reaction is S-ubiquitinyl-[E2 ubiquitin-conjugating enzyme]-L-cysteine + [acceptor protein]-L-lysine = [E2 ubiquitin-conjugating enzyme]-L-cysteine + N(6)-ubiquitinyl-[acceptor protein]-L-lysine.. It functions in the pathway protein modification; protein ubiquitination. Its function is as follows. E3 ubiquitin-protein ligase that mediates monoubiquitination of 'Lys-117' of histone H2B. H2B 'Lys-117' ubiquitination gives a specific tag for epigenetic transcriptional activation and is also prerequisite for histone H3 'Lys-4' and 'Lys-79' methylation. Involved in regulating stem cell proliferative fate. The sequence is that of E3 ubiquitin-protein ligase bre-1 from Caenorhabditis briggsae.